The chain runs to 425 residues: G protein-activated inward rectifier potassium channel 2 (425 aa).

At 1–91 (MTMAKLTESM…IFTTLVDLKW (91 aa)) the chain is on the cytoplasmic side. Residues Ser18 and Ser25 each carry the phosphoserine modification. The helical transmembrane segment at 92–116 (RFNLLIFVMVYTVTWLFFGMIWWLI) threads the bilayer. Over 117–140 (AYIRGDMDHIEDPSWTPCVTNLNG) the chain is Extracellular. Positions 141-152 (FVSAFLFSIETE) form an intramembrane region, helical; Pore-forming. Positions 153–159 (TTIGYGY) form an intramembrane region, pore-forming. Positions 154–159 (TIGYGY) match the Selectivity filter motif. Residues 160 to 168 (RVITDKCPE) lie on the Extracellular side of the membrane. Residues 169–190 (GIILLLIQSVLGSIVNAFMVGC) traverse the membrane as a helical segment. At 191 to 425 (MFVKISQPKK…VANLENESKV (235 aa)) the chain is on the cytoplasmic side. Positions 392-425 (NQHAELETEEEEKNPEELTERNGDVANLENESKV) are disordered. The PDZ-binding motif lies at 422–425 (ESKV).

The protein belongs to the inward rectifier-type potassium channel (TC 1.A.2.1) family. KCNJ6 subfamily. In terms of assembly, associates with KCNJ3/GIRK1to form a G-protein-activated heteromultimer pore-forming unit. Associates with KCNJ5/GRIK4 to form a G-protein-activated heteromultimer pore-forming unit. The resulting inward current is much larger. Interacts (via PDZ-binding motif) with SNX27 (via PDZ domain); the interaction is required when endocytosed to prevent degradation in lysosomes and promote recycling to the plasma membrane. Associates with KCNJ3/GRIK1 to form a G-protein-activated heteromultimer pore-forming unit. As to quaternary structure, associates with KCNJ3/GRIK1 to form a G-protein-activated heteromultimer pore-forming unit. The resulting inward current is much larger. In terms of tissue distribution, expressed in the brain.

The protein resides in the membrane. The catalysed reaction is K(+)(in) = K(+)(out). With respect to regulation, activated by phosphatidylinositol 4,5 biphosphate (PtdIns(4,5)P2). Functionally, inward rectifier potassium channels are characterized by a greater tendency to allow potassium to flow into the cell rather than out of it. Their voltage dependence is regulated by the concentration of extracellular potassium; as external potassium is raised, the voltage range of the channel opening shifts to more positive voltages. The inward rectification is mainly due to the blockage of outward current by internal magnesium. This potassium channel is controlled by G proteins. Forms a functional channel in association with KCNJ3/GIRK1. In terms of biological role, inward rectifier potassium channels are characterized by a greater tendency to allow potassium to flow into the cell rather than out of it. Their voltage dependence is regulated by the concentration of extracellular potassium; as external potassium is raised, the voltage range of the channel opening shifts to more positive voltages. The inward rectification is mainly due to the blockage of outward current by internal magnesium. This potassium channel is controlled by G proteins. This is G protein-activated inward rectifier potassium channel 2 (Kcnj6) from Mus musculus (Mouse).